The primary structure comprises 243 residues: Pyridoxine 5'-phosphate synthase (243 aa).

Asparagine 9 lines the 3-amino-2-oxopropyl phosphate pocket. 11–12 (DH) contributes to the 1-deoxy-D-xylulose 5-phosphate binding site. Arginine 20 contributes to the 3-amino-2-oxopropyl phosphate binding site. Histidine 45 serves as the catalytic Proton acceptor. 1-deoxy-D-xylulose 5-phosphate-binding residues include arginine 47 and histidine 52. Glutamate 72 acts as the Proton acceptor in catalysis. Residue threonine 102 coordinates 1-deoxy-D-xylulose 5-phosphate. Histidine 193 (proton donor) is an active-site residue. 3-amino-2-oxopropyl phosphate-binding positions include glycine 194 and 215 to 216 (GH).

The protein belongs to the PNP synthase family. Homooctamer; tetramer of dimers.

Its subcellular location is the cytoplasm. It catalyses the reaction 3-amino-2-oxopropyl phosphate + 1-deoxy-D-xylulose 5-phosphate = pyridoxine 5'-phosphate + phosphate + 2 H2O + H(+). Its pathway is cofactor biosynthesis; pyridoxine 5'-phosphate biosynthesis; pyridoxine 5'-phosphate from D-erythrose 4-phosphate: step 5/5. Catalyzes the complicated ring closure reaction between the two acyclic compounds 1-deoxy-D-xylulose-5-phosphate (DXP) and 3-amino-2-oxopropyl phosphate (1-amino-acetone-3-phosphate or AAP) to form pyridoxine 5'-phosphate (PNP) and inorganic phosphate. The protein is Pyridoxine 5'-phosphate synthase of Aliivibrio fischeri (strain ATCC 700601 / ES114) (Vibrio fischeri).